The chain runs to 277 residues: Putative hydro-lyase BP1875 (277 aa).

It belongs to the D-glutamate cyclase family.

The polypeptide is Putative hydro-lyase BP1875 (Bordetella pertussis (strain Tohama I / ATCC BAA-589 / NCTC 13251)).